Consider the following 381-residue polypeptide: Prokineticin receptor 2 (381 aa).

The Extracellular segment spans residues 1–51 (MGPQNRNTSFAPDLNPPQDHVSLNYSYGDYDLPLGEDEDVTKTQTFFAAKI). Asparagine 7 and asparagine 24 each carry an N-linked (GlcNAc...) asparagine glycan. A helical membrane pass occupies residues 52–72 (VIGVALAGIMLVCGIGNFVFI). Topologically, residues 73-86 (AALARYKKLRNLTN) are cytoplasmic. The chain crosses the membrane as a helical span at residues 87–107 (LLIANLAISDFLVAIVCCPFE). The Extracellular segment spans residues 108–133 (MDYYVVRQLSWAHGHVLCASVNYLRT). Cysteine 125 and cysteine 205 are joined by a disulfide. Residues 134–154 (VSLYVSTNALLAIAIDRYLAI) form a helical membrane-spanning segment. The Cytoplasmic segment spans residues 155–168 (VHPLKPRMNYQTAS). A helical membrane pass occupies residues 169–189 (FLIALVWMVSILIAVPSAYFT). Residues 190–220 (TETILVIVKNQEKIFCGQIWSVDQQLYYKSY) are Extracellular-facing. A helical transmembrane segment spans residues 221-241 (FLFVFGLEFVGPVVTMTLCYA). Residues 242–270 (RISQELWFKAVPGFQTEQIRKRLRCRRKT) are Cytoplasmic-facing. Residues 271–291 (VLLLMGILTAYVLCWAPFYGF) traverse the membrane as a helical segment. Over 292–310 (TIVRDFFPTVVVKEKHYLT) the chain is Extracellular. Residues 311 to 331 (AFYVVECIAMSNSMINTICFV) traverse the membrane as a helical segment. The Cytoplasmic segment spans residues 332-381 (TVKNNTMKYFKKMLRLHWRPSHYGSKSSADLDLKTSGVPATEEVDCIRLK).

The protein belongs to the G-protein coupled receptor 1 family. Homodimer. Expressed in several regions of the brain, including paraventricular hypothalamic nucleus, dorsal medial hypothalamic nucleus, paratenial thalamic nuclei, paracentral thalamic nucleus, lateral habenular nucleus, lateral septal nucleus, lateral globus pallidus and amygdala. Highest expression seen in paraventricular thalamic nuclei and is also extensively expressed in the suprachiasmatic nucleus.

It localises to the cell membrane. In terms of biological role, receptor for prokineticin 2. Exclusively coupled to the G(q) subclass of heteromeric G proteins. Activation leads to mobilization of calcium, stimulation of phosphoinositide turnover and activation of p44/p42 mitogen-activated protein kinase. This Mus musculus (Mouse) protein is Prokineticin receptor 2 (Prokr2).